The sequence spans 912 residues: Phosphatidylinositol-3-phosphatase SAC1 (912 aa).

The interval 1 to 29 (MAKSENSTTSTFSSFANKIQPSNDAESDP) is disordered. The 403-residue stretch at 173 to 575 (LSSVDLTKDF…GDALAQQYGG (403 aa)) folds into the SAC domain. A Phosphatase catalytic core motif is present at residues 511–522 (RTNCIDCLDRTN). The required for subcellular localization stretch occupies residues 715–912 (RPGGNTGSTG…VGDDKVPKVI (198 aa)). Positions 740-766 (LFGSRKPEESSSATKSGADDSEKGVTS) are disordered.

In terms of assembly, component of the PI(3,5)P2 regulatory complex at least composed of ATG18, SAC/FIG4, FAB1 and VAC14. Mg(2+) is required as a cofactor. Ubiquitous with higher expression level in both young elongating and nonelongating stems. Detected in vascular tissues.

It is found in the vacuole membrane. It localises to the golgi apparatus. It carries out the reaction a 1,2-diacyl-sn-glycero-3-phospho-(1D-myo-inositol-3-phosphate) + H2O = a 1,2-diacyl-sn-glycero-3-phospho-(1D-myo-inositol) + phosphate. It catalyses the reaction a 1,2-diacyl-sn-glycero-3-phospho-(1D-myo-inositol-3,5-bisphosphate) + H2O = a 1,2-diacyl-sn-glycero-3-phospho-(1D-myo-inositol-3-phosphate) + phosphate. The catalysed reaction is a 1,2-diacyl-sn-glycero-3-phospho-(1D-myo-inositol 4-phosphate) + H2O = a 1,2-diacyl-sn-glycero-3-phospho-(1D-myo-inositol) + phosphate. In terms of biological role, phosphoinositide phosphatase which catalyzes the hydrolysis of phosphatidylinositol-3,5-bisphosphate (PtdIns(3,5)P2). Can also catalyze the hydrolysis of phosphatidylinositol 3-phosphate (PtdIns(3)P) and phosphatidylinositol 4-phosphate (PtdIns(4)P). Required for normal cell morphogenesis, cell wall synthesis, and actin organization. The protein is Phosphatidylinositol-3-phosphatase SAC1 (SAC1) of Arabidopsis thaliana (Mouse-ear cress).